The chain runs to 505 residues: Circadian clock protein KaiC3 (505 aa).

2 consecutive KaiC domains span residues 10–252 and 253–485; these read EKLE…KSSD and IRIT…LAGT. Residue S423 is modified to Phosphoserine; by autocatalysis. A Phosphothreonine; by autocatalysis modification is found at T424.

Belongs to the KaiC family. Multimerizes, probably forming homohexamers, no interaction with KaiC1 or KaiC2 is seen. In another study forms hexamers, interacts with KaiB1, KaiB3, and KaiC1. Autophosphorylates and dephosphorylates. Dephosphorylation of KaiC3 was higher at 25 than at 30 or 35 degrees Celsius.

It carries out the reaction L-seryl-[protein] + ATP = O-phospho-L-seryl-[protein] + ADP + H(+). The catalysed reaction is L-threonyl-[protein] + ATP = O-phospho-L-threonyl-[protein] + ADP + H(+). The enzyme catalyses ATP + H2O = ADP + phosphate + H(+). With respect to regulation, ATPase activity is influenced by KaiB1 and KaiB3 in vitro; ATPase is reduced 35% by the KaiB1 tetramer and 55% by the KaiB3 monomer but not affected by KaiA or the KaiB3 tetramer. Seems to be linked to dark adaption of Synechocystis cells, but is not as essential as the core oscillator KaiAB1C1 for the circadian cycle. KaiB3 and KaiC3 may cross talk with the core oscillator. Autophosphorylates and dephosphorylates independently of KaiA. Has a weak ATPase, hydrolyzes 8.5 ATP/monomer/day, has no detectable ATP synthesis activity. ATPase activity reduced 55% by KaiB3 monomer but not the KaiB3 tetramer or KaiA in vitro, reduced 35% by KaiB1 tetramer. This is Circadian clock protein KaiC3 from Synechocystis sp. (strain ATCC 27184 / PCC 6803 / Kazusa).